The following is a 318-amino-acid chain: ATP phosphoribosyltransferase regulatory subunit (318 aa).

This sequence belongs to the class-II aminoacyl-tRNA synthetase family. HisZ subfamily. In terms of assembly, heteromultimer composed of HisG and HisZ subunits.

The protein resides in the cytoplasm. The protein operates within amino-acid biosynthesis; L-histidine biosynthesis; L-histidine from 5-phospho-alpha-D-ribose 1-diphosphate: step 1/9. In terms of biological role, required for the first step of histidine biosynthesis. May allow the feedback regulation of ATP phosphoribosyltransferase activity by histidine. The sequence is that of ATP phosphoribosyltransferase regulatory subunit from Lactococcus lactis subsp. cremoris (strain SK11).